A 406-amino-acid polypeptide reads, in one-letter code: Cysteine desulfurase (406 aa).

K226 carries the N6-(pyridoxal phosphate)lysine modification. C364 acts as the Cysteine persulfide intermediate in catalysis.

Belongs to the class-V pyridoxal-phosphate-dependent aminotransferase family. Csd subfamily. Homodimer. Interacts with SufE and the SufBCD complex composed of SufB, SufC and SufD. The interaction with SufE is required to mediate the direct transfer of the sulfur atom from the S-sulfanylcysteine. Requires pyridoxal 5'-phosphate as cofactor.

The protein resides in the cytoplasm. The enzyme catalyses (sulfur carrier)-H + L-cysteine = (sulfur carrier)-SH + L-alanine. It catalyses the reaction L-selenocysteine + AH2 = hydrogenselenide + L-alanine + A + H(+). It functions in the pathway cofactor biosynthesis; iron-sulfur cluster biosynthesis. In terms of biological role, cysteine desulfurases mobilize the sulfur from L-cysteine to yield L-alanine, an essential step in sulfur metabolism for biosynthesis of a variety of sulfur-containing biomolecules. Component of the suf operon, which is activated and required under specific conditions such as oxidative stress and iron limitation. Acts as a potent selenocysteine lyase in vitro, that mobilizes selenium from L-selenocysteine. Selenocysteine lyase activity is however unsure in vivo. In Klebsiella pneumoniae subsp. pneumoniae (strain ATCC 700721 / MGH 78578), this protein is Cysteine desulfurase.